The chain runs to 517 residues: Crotonobetaine/carnitine--CoA ligase (517 aa).

It belongs to the ATP-dependent AMP-binding enzyme family.

The catalysed reaction is 4-(trimethylamino)butanoate + ATP + CoA = 4-(trimethylamino)butanoyl-CoA + AMP + diphosphate. It carries out the reaction crotonobetaine + ATP + CoA = crotonobetainyl-CoA + AMP + diphosphate. It catalyses the reaction (R)-carnitine + ATP + CoA = (R)-carnitinyl-CoA + AMP + diphosphate. The protein operates within amine and polyamine metabolism; carnitine metabolism. Its function is as follows. Catalyzes the transfer of CoA to carnitine, generating the initial carnitinyl-CoA needed for the CaiB reaction cycle. Also has activity toward crotonobetaine and gamma-butyrobetaine. This Salmonella arizonae (strain ATCC BAA-731 / CDC346-86 / RSK2980) protein is Crotonobetaine/carnitine--CoA ligase.